Consider the following 593-residue polypeptide: Melanopsin-A (593 aa).

At 1-77 (MMSGAAHSVR…VDVPDHAHYT (77 aa)) the chain is on the extracellular side. A helical transmembrane segment spans residues 78–98 (IGAVILTVGITGMLGNFLVIY). The Cytoplasmic portion of the chain corresponds to 99–112 (AFSRSRTLRTPANL). The chain crosses the membrane as a helical span at residues 113–133 (FIINLAITDFLMCATQAPIFF). Topologically, residues 134–150 (TTSMHKRWIFGEKGCEL) are extracellular. Residues Cys-148 and Cys-226 are joined by a disulfide bond. Residues 151–171 (YAFCGALFGICSMITLMVIAV) form a helical membrane-spanning segment. The Cytoplasmic portion of the chain corresponds to 172–191 (DRYFVITRPLASIGVLSQKR). Residues 192 to 212 (ALLILLVAWVYSLGWSLPPFF) traverse the membrane as a helical segment. At 213–243 (GWSAYVPEGLLTSCTWDYMTFTPSVRAYTML) the chain is on the extracellular side. A helical membrane pass occupies residues 244 to 264 (LFIFVFFIPLIVIIYCYFFIF). Residues 265–300 (RSIRTTNEAVGKINGDNKRDSMKRFQRLKNEWKMAK) are Cytoplasmic-facing. The helical transmembrane segment at 301–321 (IALIVILMYVISWSPYSTVAL) threads the bilayer. Residues 322–336 (TAFAGYSDFLTPYMN) lie on the Extracellular side of the membrane. A helical transmembrane segment spans residues 337-357 (SVPAVIAKASAIHNPIIYAIT). Residue Lys-344 is modified to N6-(retinylidene)lysine. Over 358–593 (HPKYRLAIAK…HIDNHRPQYL (236 aa)) the chain is Cytoplasmic. Disordered stretches follow at residues 397–449 (TVTS…RQVS) and 547–593 (RSNV…PQYL). Residues 414–449 (TGKSRLSSASDSESGWTDTEADLSSMSSRPASRQVS) are compositionally biased toward polar residues. Over residues 581–593 (ESGHIDNHRPQYL) the composition is skewed to basic and acidic residues.

This sequence belongs to the G-protein coupled receptor 1 family. Opsin subfamily.

The protein resides in the cell membrane. In terms of biological role, photoreceptor implicated in non-image-forming responses to light. May be able to isomerize covalently bound all-trans retinal back to 11-cis retinal. The protein is Melanopsin-A (opn4a) of Danio rerio (Zebrafish).